A 138-amino-acid chain; its full sequence is Histone H3 (138 aa).

The tract at residues 1 to 49 (MARTKQTARKSTGGKAPRKQLATKAARKQAPSQVSGGVKKPHRYRPGTV) is disordered. Position 5 is an N6,N6,N6-trimethyllysine; alternate (K5). K5 is modified (N6,N6-dimethyllysine; alternate). 2 positions are modified to N6-methyllysine; alternate: K5 and K10. At K10 the chain carries N6-acetyllysine; alternate. The residue at position 11 (S11) is a Phosphoserine. An N6,N6-dimethyllysine; alternate modification is found at K15. An N6-methyllysine; alternate mark is found at K15, K19, K24, K28, and K39. Residues K15, K19, K24, K28, and K39 each carry the N6-acetyllysine; alternate modification. N6,N6,N6-trimethyllysine; alternate is present on residues K28 and K39. N6,N6-dimethyllysine; alternate is present on residues K28 and K39. N6-acetyllysine occurs at positions 59 and 67. N6,N6,N6-trimethyllysine; alternate is present on K82. An N6,N6-dimethyllysine; alternate modification is found at K82. An N6-methyllysine; alternate modification is found at K82.

It belongs to the histone H3 family. The nucleosome is a histone octamer containing two molecules each of H2A, H2B, H3 and H4 assembled in one H3-H4 heterotetramer and two H2A-H2B heterodimers. The octamer wraps approximately 147 bp of DNA. In terms of processing, phosphorylated to form H3S10ph. H3S10ph promotes subsequent H3K14ac formation and is required for transcriptional activation through TBP recruitment to the promoters. Mono-, di- and trimethylated by the COMPASS complex to form H3K4me1/2/3. H3K4me activates gene expression by regulating transcription elongation and plays a role in telomere length maintenance. H3K4me enrichment correlates with transcription levels, and occurs in a 5' to 3' gradient with H3K4me3 enrichment at the 5'-end of genes, shifting to H3K4me2 and then H3K4me1. Methylated by SET2 to form H3K36me. H3K36me represses gene expression. Methylated by DOT1 to form H3K79me. H3K79me is required for association of SIR proteins with telomeric regions and for telomeric silencing. The COMPASS-mediated formation of H3K4me2/3 and the DOT1-mediated formation of H3K79me require H2BK123ub1. Post-translationally, acetylation of histone H3 leads to transcriptional activation. H3K14ac formation by GCN5 is promoted by H3S10ph. H3K14ac can also be formed by ESA1. H3K56ac formation occurs predominantly in newly synthesized H3 molecules during G1, S and G2/M of the cell cycle and may be involved in DNA repair.

It is found in the nucleus. It localises to the chromosome. Its function is as follows. Core component of nucleosome. Nucleosomes wrap and compact DNA into chromatin, limiting DNA accessibility to the cellular machineries which require DNA as a template. Histones thereby play a central role in transcription regulation, DNA repair, DNA replication and chromosomal stability. DNA accessibility is regulated via a complex set of post-translational modifications of histones, also called histone code, and nucleosome remodeling. This Cryptococcus neoformans var. neoformans serotype D (strain B-3501A) (Filobasidiella neoformans) protein is Histone H3 (HHT1).